The chain runs to 423 residues: MLDPKILRQNLEHVVEKLRRRGFEMDSDTFLQLENKRKEAQLAIQSFQTKRNQLSKTIGMAKSKGENPEPLMAEVSHLNDELKQEEANFETIQKAFSDFQLAIPNLPHDSVPDGKSENDNREIRQWGAPPGFDFTPKDHTVLGERDNQLDFEAAAKLSGARFVVLRGSLARAHRALAQFMLDLHTDQHGYEEVYVPYLVHEECLYGTGQLPKFREEQFQVAGDRNFFLVPTGEVPLVNLARDEIIEAPALPKKWVAQTPCFRSEAGSYGKDVRGMIRQHQFQKVELVQLVQPENSYQALEEITRQAEKVLQLLALPYRVVELCAGDLGFAAAKTYDLEVWLPSQNKYREISSCSNCEDFQARRIQARWRNPKTGKPELLHTLNGSGLAVGRTLVAVMENYQQADGHIRVPDALKSYMGGVDYF.

The disordered stretch occupies residues 107–130 (PHDSVPDGKSENDNREIRQWGAPP). The span at 110-124 (SVPDGKSENDNREIR) shows a compositional bias: basic and acidic residues. 231-233 (TGE) serves as a coordination point for L-serine. 262–264 (RSE) provides a ligand contact to ATP. Residue Glu-285 coordinates L-serine. Residue 349 to 352 (EISS) participates in ATP binding. L-serine is bound at residue Ser-385.

It belongs to the class-II aminoacyl-tRNA synthetase family. Type-1 seryl-tRNA synthetase subfamily. As to quaternary structure, homodimer. The tRNA molecule binds across the dimer.

It is found in the cytoplasm. It catalyses the reaction tRNA(Ser) + L-serine + ATP = L-seryl-tRNA(Ser) + AMP + diphosphate + H(+). The catalysed reaction is tRNA(Sec) + L-serine + ATP = L-seryl-tRNA(Sec) + AMP + diphosphate + H(+). It functions in the pathway aminoacyl-tRNA biosynthesis; selenocysteinyl-tRNA(Sec) biosynthesis; L-seryl-tRNA(Sec) from L-serine and tRNA(Sec): step 1/1. Its function is as follows. Catalyzes the attachment of serine to tRNA(Ser). Is also able to aminoacylate tRNA(Sec) with serine, to form the misacylated tRNA L-seryl-tRNA(Sec), which will be further converted into selenocysteinyl-tRNA(Sec). The protein is Serine--tRNA ligase of Coxiella burnetii (strain Dugway 5J108-111).